The primary structure comprises 633 residues: Mitochondrial Rho GTPase 1 (633 aa).

The Miro 1 domain maps to 1 to 170 (MATVRICVCG…FFLCQKAVTH (170 aa)). Topologically, residues 1-603 (MATVRICVCG…PRSEEDVEGK (603 aa)) are cytoplasmic. GTP-binding positions include 10 to 17 (GDEGTGKS), 59 to 63 (DTSAL), and 115 to 118 (NKSD). EF-hand domains are found at residues 186–221 (AAVAALQRIFYLSDKDRDGYLSDKELEDFQMRCFEK) and 306–341 (EGYRFFVNLFLLSDKDNDGGLNDAELASLFAPTPGL). Ca(2+) is bound by residues Asp199, Asp201, Asp203, Tyr205, Glu210, Asp319, Asp321, Asp323, and Glu330. Residues 398–418 (NPSTTAALKVTRPRKRRKRPG) are disordered. Residues 408–418 (TRPRKRRKRPG) show a composition bias toward basic residues. One can recognise a Miro 2 domain in the interval 422 to 588 (RNVVLGHVLG…FVHIAEAAME (167 aa)). Residues 431 to 438 (GPPGSGKS), 467 to 471 (ELPGG), and 537 to 540 (LKAD) contribute to the GTP site. The chain crosses the membrane as a helical; Anchor for type IV membrane protein span at residues 604–624 (WMAWGIALGAVVCAGAAAVMI). Topologically, residues 625–633 (WRRVSGSGT) are mitochondrial intermembrane.

It belongs to the mitochondrial Rho GTPase family.

It is found in the mitochondrion outer membrane. In terms of biological role, mitochondrial GTPase involved in mitochondrial trafficking. Probably involved in control of anterograde transport of mitochondria and their subcellular distribution. The protein is Mitochondrial Rho GTPase 1 (gem1) of Aspergillus oryzae (strain ATCC 42149 / RIB 40) (Yellow koji mold).